Here is a 238-residue protein sequence, read N- to C-terminus: tRNA (guanine-N(1)-)-methyltransferase (238 aa).

Residues Gly108 and Leu127–Leu132 each bind S-adenosyl-L-methionine.

Belongs to the RNA methyltransferase TrmD family. Homodimer.

It is found in the cytoplasm. It catalyses the reaction guanosine(37) in tRNA + S-adenosyl-L-methionine = N(1)-methylguanosine(37) in tRNA + S-adenosyl-L-homocysteine + H(+). Specifically methylates guanosine-37 in various tRNAs. The sequence is that of tRNA (guanine-N(1)-)-methyltransferase from Streptococcus uberis (strain ATCC BAA-854 / 0140J).